A 326-amino-acid chain; its full sequence is Interleukin-1-binding protein (326 aa).

Positions 1-18 (MSILPVIFLSIFFYSSFV) are cleaved as a signal peptide. Ig-like domains are found at residues 24-115 (PECI…LNLT), 122-212 (SNID…RIVK), and 221-322 (PSTM…KTVT). Cys-48 and Cys-99 form a disulfide bridge. N-linked (GlcNAc...) asparagine; by host glycans are attached at residues Asn-80, Asn-103, and Asn-113. Cysteines 143 and 194 form a disulfide. Asn-206 and Asn-237 each carry an N-linked (GlcNAc...) asparagine; by host glycan. Cys-242 and Cys-309 are oxidised to a cystine.

The protein belongs to the interleukin-1 receptor family. In terms of assembly, interacts with mouse Il1b.

It is found in the secreted. May reduce the host inflammatory response by interacting with inteleukin-1 beta (Il1b) and thus decreasing the association between IL1B and its cellular receptor. In Vaccinia virus (strain Ankara) (VACV), this protein is Interleukin-1-binding protein (OPG201).